Reading from the N-terminus, the 495-residue chain is Omega-crystallin (495 aa).

This sequence belongs to the aldehyde dehydrogenase family. As to expression, lens.

Functionally, omega-crystallins are structural components of squids and octopi eye lens. Contains relatively little if any DHAL activity. The sequence is that of Omega-crystallin from Nototodarus sloanii (Wellington flying squid).